The primary structure comprises 345 residues: Phosphoribosylformylglycinamidine cyclo-ligase (345 aa).

Belongs to the AIR synthase family.

The protein resides in the cytoplasm. It catalyses the reaction 2-formamido-N(1)-(5-O-phospho-beta-D-ribosyl)acetamidine + ATP = 5-amino-1-(5-phospho-beta-D-ribosyl)imidazole + ADP + phosphate + H(+). It participates in purine metabolism; IMP biosynthesis via de novo pathway; 5-amino-1-(5-phospho-D-ribosyl)imidazole from N(2)-formyl-N(1)-(5-phospho-D-ribosyl)glycinamide: step 2/2. The protein is Phosphoribosylformylglycinamidine cyclo-ligase of Anaeromyxobacter dehalogenans (strain 2CP-C).